Consider the following 236-residue polypeptide: Phosphoribosylaminoimidazole-succinocarboxamide synthase (236 aa).

This sequence belongs to the SAICAR synthetase family.

It carries out the reaction 5-amino-1-(5-phospho-D-ribosyl)imidazole-4-carboxylate + L-aspartate + ATP = (2S)-2-[5-amino-1-(5-phospho-beta-D-ribosyl)imidazole-4-carboxamido]succinate + ADP + phosphate + 2 H(+). It functions in the pathway purine metabolism; IMP biosynthesis via de novo pathway; 5-amino-1-(5-phospho-D-ribosyl)imidazole-4-carboxamide from 5-amino-1-(5-phospho-D-ribosyl)imidazole-4-carboxylate: step 1/2. The chain is Phosphoribosylaminoimidazole-succinocarboxamide synthase from Rickettsia akari (strain Hartford).